We begin with the raw amino-acid sequence, 464 residues long: Divalent metal cation transporter MntH (464 aa).

11 helical membrane-spanning segments follow: residues 57–77 (ILIA…AGGA), 82–102 (SLLS…SMAA), 125–145 (GIIL…AEII), 157–177 (IPLV…LLLM), 186–206 (AIVA…VFLA), 229–249 (MLYL…LYLG), 281–301 (LTIA…LFFG), 321–341 (IVGA…LLSS), 376–396 (LLSV…EAKI), 399–419 (LLTL…VPLV), and 443–463 (VATV…VGVI).

It belongs to the NRAMP family.

It localises to the cell membrane. Functionally, h(+)-stimulated, divalent metal cation uptake system. The protein is Divalent metal cation transporter MntH of Levilactobacillus brevis (Lactobacillus brevis).